The following is a 264-amino-acid chain: Ribonuclease HII (264 aa).

In terms of domain architecture, RNase H type-2 spans 69 to 263 (KVVCGIDEVG…EENAKTITKP (195 aa)). The a divalent metal cation site is built by Asp75, Glu76, and Asp166.

Belongs to the RNase HII family. Mn(2+) serves as cofactor. It depends on Mg(2+) as a cofactor.

It is found in the cytoplasm. The enzyme catalyses Endonucleolytic cleavage to 5'-phosphomonoester.. Endonuclease that specifically degrades the RNA of RNA-DNA hybrids. This Macrococcus caseolyticus (strain JCSC5402) (Macrococcoides caseolyticum) protein is Ribonuclease HII.